We begin with the raw amino-acid sequence, 490 residues long: MARFGTQKLYIDGAYVDAGSDATFEAINPATGEVLAHVQRATEADVEKAVESAERGQKVWAAMTAMQRSRILRRAVDILRERNDELAMLETLDTGKSYSETRYVDIVTGADVLEYYAGLVPAIEGEQIPLRESSFVYTRREPLGVTVGIGAWNYPIQIALWKSAPALAAGNAMIFKPSEVTSLTTLKLAEIYTEAGLPNGVFNVLTGSGREVGTWLTEHPRIEKVSFTGGTTTGKKVMASASSSSLKEVTMELGGKSPLIICADADLDKAADIAMMANFYSSGQVCTNGTRVFIPAEMKAAFEAKIAERVARIRVGNPEDENTNFGPLVSFQHMESVLGYIAKGKEEGARVLCGGERLTAGDFAKGAFVAPTVFTDCTDDMTIVKEEIFGPVMSILTYETEEEVIRRANDTDYGLAAGVCTNDITRAHRIIHKLEAGICWINAWGESPAEMPVGGYKQSGVGRENGVSSLAQYTRIKSVQVELGGYNSVF.

Residues I27 and D93 each contribute to the K(+) site. 150–152 (GAW) is a binding site for NAD(+). The Charge relay system role is filled by K162. Residue 176 to 179 (KPSE) coordinates NAD(+). V180 contacts K(+). 230–233 (GTTT) provides a ligand contact to NAD(+). K(+) is bound at residue L246. E252 (proton acceptor) is an active-site residue. Residues G254, C286, and E387 each coordinate NAD(+). The active-site Nucleophile is the C286. Position 286 is a cysteine sulfenic acid (-SOH) (C286). K(+) is bound by residues K457 and G460. E464 (charge relay system) is an active-site residue.

The protein belongs to the aldehyde dehydrogenase family. Dimer of dimers. K(+) serves as cofactor.

The catalysed reaction is betaine aldehyde + NAD(+) + H2O = glycine betaine + NADH + 2 H(+). Its pathway is amine and polyamine biosynthesis; betaine biosynthesis via choline pathway; betaine from betaine aldehyde: step 1/1. In terms of biological role, involved in the biosynthesis of the osmoprotectant glycine betaine. Catalyzes the irreversible oxidation of betaine aldehyde to the corresponding acid. The protein is Betaine aldehyde dehydrogenase of Pseudomonas putida (strain ATCC 700007 / DSM 6899 / JCM 31910 / BCRC 17059 / LMG 24140 / F1).